The sequence spans 455 residues: UDP-N-acetylmuramoylalanine--D-glutamate ligase (455 aa).

117–123 contributes to the ATP binding site; that stretch reads GSAGKTT.

Belongs to the MurCDEF family.

The protein localises to the cytoplasm. It catalyses the reaction UDP-N-acetyl-alpha-D-muramoyl-L-alanine + D-glutamate + ATP = UDP-N-acetyl-alpha-D-muramoyl-L-alanyl-D-glutamate + ADP + phosphate + H(+). Its pathway is cell wall biogenesis; peptidoglycan biosynthesis. In terms of biological role, cell wall formation. Catalyzes the addition of glutamate to the nucleotide precursor UDP-N-acetylmuramoyl-L-alanine (UMA). This chain is UDP-N-acetylmuramoylalanine--D-glutamate ligase, found in Symbiobacterium thermophilum (strain DSM 24528 / JCM 14929 / IAM 14863 / T).